The primary structure comprises 412 residues: Zinc finger protein 821 (412 aa).

The disordered stretch occupies residues Arg26–Lys83. A compositionally biased stretch (acidic residues) spans Ser58–Gln67. 2 consecutive C2H2-type zinc fingers follow at residues Gly116 to His140 and Tyr150 to His172. Residues Lys257–Gln366 adopt a coiled-coil conformation. The disordered stretch occupies residues Arg278–Arg319.

This sequence belongs to the krueppel C2H2-type zinc-finger protein family.

The protein resides in the nucleus. Functionally, may be involved in transcriptional regulation. This chain is Zinc finger protein 821 (ZNF821), found in Bos taurus (Bovine).